The sequence spans 433 residues: Protein disulfide-isomerase A6 homolog (433 aa).

A signal peptide spans 1 to 19; the sequence is MRQLASILLLAFVVGSVSA. 2 consecutive Thioredoxin domains span residues 20–119 and 120–267; these read FYSP…GQRT and AKAI…KHVA. Catalysis depends on nucleophile residues C55, C58, C186, and C189. 2 disulfides stabilise this stretch: C55–C58 and C186–C189. N-linked (GlcNAc...) asparagine glycosylation is present at N279. Residues 405 to 433 are disordered; it reads VDPWDGKDGQLPTEEDIDLSDIDLDKDEL. Positions 417–433 are enriched in acidic residues; that stretch reads TEEDIDLSDIDLDKDEL. The short motif at 430–433 is the Prevents secretion from ER element; that stretch reads KDEL.

The protein belongs to the protein disulfide isomerase family. In terms of assembly, interacts with Drpr (via extracellular region). In terms of tissue distribution, in the blastoderm embryo, expression starts at the anterior and posterior poles and later appears as broad stripes. Following gastrulation, expressed in midline precursor cells and the posterior head with low levels present throughout the embryo. During germ band extension, weak dorsoventral stripes of expression are evident. Midline expression begins and is retained throughout embryogenesis in clusters of cells in each segment in the central nervous system. At least some of the midline expression occurs in VUM neurons.

It is found in the endoplasmic reticulum lumen. The protein resides in the cell surface. It catalyses the reaction Catalyzes the rearrangement of -S-S- bonds in proteins.. Binds to both apoptotic cells and phagocytes and promotes Drpr-dependent phagocytosis of apoptotic cells. The chain is Protein disulfide-isomerase A6 homolog from Drosophila melanogaster (Fruit fly).